The following is a 435-amino-acid chain: MKPLTKNNLVAIVGKPNVGKSTLFNRLVGKRVSIVYDQPGVTRDRIYENINWSGKNFRIIDTGGIVVSDQPFVEQIRIQAQIAIEESEIILFVIDGSEEITSDDLYIASILRNSKKKVLVLANKLDNNKNEDYSIYSLGFEDYYKISSVHGEGIGEVLDKVINLMNFENDQDEDLFKIAILGKPNAGKSSLLNALTKQERSIVSEIAGTTRDSIKSTIEIEDQKFFIIDTAGINRKSKLVESVDHYALMRAMGSLDESDLSIIIIDATEELSHFNARIIGYASDKKKPTIIVINKWDLIKKETNTMIEYEKKLREKMPFISWMPIVFISALKSQRLNKLEKVIIQVKNNLSREIKQNLLNDLLVDMQTMNPLTFKGKKLEIKHIKKTNDPVPTFLLFVNNPNIVHFSYLRYIENQIRDYFDFTGCPINLVLKKNK.

2 consecutive EngA-type G domains span residues 8 to 169 (NLVA…NFEN) and 176 to 351 (FKIA…NNLS). GTP-binding positions include 14–21 (GKPNVGKS), 61–65 (DTGGI), 123–126 (NKLD), 182–189 (GKPNAGKS), 229–233 (DTAGI), and 294–297 (NKWD). The 84-residue stretch at 352–435 (REIKQNLLND…PINLVLKKNK (84 aa)) folds into the KH-like domain.

This sequence belongs to the TRAFAC class TrmE-Era-EngA-EngB-Septin-like GTPase superfamily. EngA (Der) GTPase family. As to quaternary structure, associates with the 50S ribosomal subunit.

In terms of biological role, GTPase that plays an essential role in the late steps of ribosome biogenesis. In Mycoplasmopsis pulmonis (strain UAB CTIP) (Mycoplasma pulmonis), this protein is GTPase Der.